The primary structure comprises 237 residues: Ribonuclease PH (237 aa).

Residues Arg86 and 124-126 (GTR) contribute to the phosphate site.

This sequence belongs to the RNase PH family. Homohexameric ring arranged as a trimer of dimers.

It carries out the reaction tRNA(n+1) + phosphate = tRNA(n) + a ribonucleoside 5'-diphosphate. Functionally, phosphorolytic 3'-5' exoribonuclease that plays an important role in tRNA 3'-end maturation. Removes nucleotide residues following the 3'-CCA terminus of tRNAs; can also add nucleotides to the ends of RNA molecules by using nucleoside diphosphates as substrates, but this may not be physiologically important. Probably plays a role in initiation of 16S rRNA degradation (leading to ribosome degradation) during starvation. The protein is Ribonuclease PH of Shewanella pealeana (strain ATCC 700345 / ANG-SQ1).